Consider the following 694-residue polypeptide: Polyribonucleotide nucleotidyltransferase (694 aa).

Residues Asp-486 and Asp-492 each contribute to the Mg(2+) site. Residues 553 to 612 form the KH domain; the sequence is PRIETMQIKPTKIASVIGPGGKQIRQIIEETGVQIDVNDLGVVSISASSASAINKAKEII. Positions 622–690 constitute an S1 motif domain; it reads GKTYRGRVTS…EKGQLKLSHK (69 aa).

This sequence belongs to the polyribonucleotide nucleotidyltransferase family. Requires Mg(2+) as cofactor.

It localises to the cytoplasm. It catalyses the reaction RNA(n+1) + phosphate = RNA(n) + a ribonucleoside 5'-diphosphate. Functionally, involved in mRNA degradation. Catalyzes the phosphorolysis of single-stranded polyribonucleotides processively in the 3'- to 5'-direction. The sequence is that of Polyribonucleotide nucleotidyltransferase from Chlamydia pneumoniae (Chlamydophila pneumoniae).